The sequence spans 80 residues: Translation initiation factor IF-1 (80 aa).

An S1-like domain is found at 6-80; sequence RKQEHEKERG…LTRGRIVYRL (75 aa).

It belongs to the IF-1 family. Component of the 30S ribosomal translation pre-initiation complex which assembles on the 30S ribosome in the order IF-2 and IF-3, IF-1 and N-formylmethionyl-tRNA(fMet); mRNA recruitment can occur at any time during PIC assembly.

The protein localises to the cytoplasm. Its function is as follows. One of the essential components for the initiation of protein synthesis. Stabilizes the binding of IF-2 and IF-3 on the 30S subunit to which N-formylmethionyl-tRNA(fMet) subsequently binds. Helps modulate mRNA selection, yielding the 30S pre-initiation complex (PIC). Upon addition of the 50S ribosomal subunit IF-1, IF-2 and IF-3 are released leaving the mature 70S translation initiation complex. This chain is Translation initiation factor IF-1, found in Aquifex aeolicus (strain VF5).